A 142-amino-acid chain; its full sequence is Required for drug-induced death protein 1 (142 aa).

Disordered regions lie at residues 1–32 (MTVG…DEEA) and 46–66 (EAAA…TRGA). The helical transmembrane segment at 116–138 (VVIGLQGFAAAYSAPFAVATSVV) threads the bilayer.

The protein localises to the membrane. Regulates drug efflux through modulation of ABCB1 localization and activity. The protein is Required for drug-induced death protein 1 of Homo sapiens (Human).